The chain runs to 123 residues: Large ribosomal subunit protein bL12 (123 aa).

The protein belongs to the bacterial ribosomal protein bL12 family. Homodimer. Part of the ribosomal stalk of the 50S ribosomal subunit. Forms a multimeric L10(L12)X complex, where L10 forms an elongated spine to which 2 to 4 L12 dimers bind in a sequential fashion. Binds GTP-bound translation factors.

Forms part of the ribosomal stalk which helps the ribosome interact with GTP-bound translation factors. Is thus essential for accurate translation. This is Large ribosomal subunit protein bL12 from Ectopseudomonas mendocina (strain ymp) (Pseudomonas mendocina).